The sequence spans 104 residues: Small ribosomal subunit protein bS16 (104 aa).

The protein belongs to the bacterial ribosomal protein bS16 family.

The chain is Small ribosomal subunit protein bS16 from Wolbachia pipientis subsp. Culex pipiens (strain wPip).